The sequence spans 502 residues: Acetyl-coenzyme A carboxylase carboxyl transferase subunit beta, chloroplastic (502 aa).

A compositionally biased stretch (low complexity) spans 191–202 (GSDSESSSIRTS). Residues 191–212 (GSDSESSSIRTSGNDSNFNVRE) form a disordered region. The 272-residue stretch at 226-497 (LWVQCENCYE…NQNSSGARGS (272 aa)) folds into the CoA carboxyltransferase N-terminal domain. Zn(2+) contacts are provided by C230, C233, C249, and C252. Residues 230–252 (CENCYELNYRSFFRSKMNICEQC) form a C4-type zinc finger.

It belongs to the AccD/PCCB family. As to quaternary structure, acetyl-CoA carboxylase is a heterohexamer composed of biotin carboxyl carrier protein, biotin carboxylase and 2 subunits each of ACCase subunit alpha and ACCase plastid-coded subunit beta (accD). Zn(2+) serves as cofactor.

It localises to the plastid. Its subcellular location is the chloroplast stroma. It catalyses the reaction N(6)-carboxybiotinyl-L-lysyl-[protein] + acetyl-CoA = N(6)-biotinyl-L-lysyl-[protein] + malonyl-CoA. The protein operates within lipid metabolism; malonyl-CoA biosynthesis; malonyl-CoA from acetyl-CoA: step 1/1. Its function is as follows. Component of the acetyl coenzyme A carboxylase (ACC) complex. Biotin carboxylase (BC) catalyzes the carboxylation of biotin on its carrier protein (BCCP) and then the CO(2) group is transferred by the transcarboxylase to acetyl-CoA to form malonyl-CoA. The protein is Acetyl-coenzyme A carboxylase carboxyl transferase subunit beta, chloroplastic of Chloranthus spicatus (Chulantree).